A 716-amino-acid polypeptide reads, in one-letter code: Polyribonucleotide nucleotidyltransferase (716 aa).

Mg(2+) contacts are provided by Asp-490 and Asp-496. The KH domain maps to 556–615 (PKIETLTIPTDKIREVIGSGGKVIREIVETSGAKVDINDDGVIKIASNDQAAIKKAYDMI). The S1 motif domain maps to 625 to 693 (GQIYTGKVVK…ERGKVRLGMK (69 aa)). Residues 695–716 (VDQETGQEIQPEKKEKEEAGEA) form a disordered region. Residues 704 to 716 (QPEKKEKEEAGEA) show a composition bias toward basic and acidic residues.

It belongs to the polyribonucleotide nucleotidyltransferase family. Mg(2+) serves as cofactor.

Its subcellular location is the cytoplasm. The enzyme catalyses RNA(n+1) + phosphate = RNA(n) + a ribonucleoside 5'-diphosphate. Involved in mRNA degradation. Catalyzes the phosphorolysis of single-stranded polyribonucleotides processively in the 3'- to 5'-direction. The protein is Polyribonucleotide nucleotidyltransferase of Cereibacter sphaeroides (strain ATCC 17029 / ATH 2.4.9) (Rhodobacter sphaeroides).